A 335-amino-acid chain; its full sequence is Phosphate acyltransferase (335 aa).

Belongs to the PlsX family. Homodimer. Probably interacts with PlsY.

The protein localises to the cytoplasm. The catalysed reaction is a fatty acyl-[ACP] + phosphate = an acyl phosphate + holo-[ACP]. It functions in the pathway lipid metabolism; phospholipid metabolism. Catalyzes the reversible formation of acyl-phosphate (acyl-PO(4)) from acyl-[acyl-carrier-protein] (acyl-ACP). This enzyme utilizes acyl-ACP as fatty acyl donor, but not acyl-CoA. This is Phosphate acyltransferase from Heliobacterium modesticaldum (strain ATCC 51547 / Ice1).